The primary structure comprises 110 residues: Ribonuclease P protein component 1 (110 aa).

Belongs to the eukaryotic/archaeal RNase P protein component 1 family. In terms of assembly, consists of a catalytic RNA component and at least 4-5 protein subunits.

It is found in the cytoplasm. The enzyme catalyses Endonucleolytic cleavage of RNA, removing 5'-extranucleotides from tRNA precursor.. In terms of biological role, part of ribonuclease P, a protein complex that generates mature tRNA molecules by cleaving their 5'-ends. This Methanosarcina mazei (strain ATCC BAA-159 / DSM 3647 / Goe1 / Go1 / JCM 11833 / OCM 88) (Methanosarcina frisia) protein is Ribonuclease P protein component 1.